The primary structure comprises 710 residues: Denticleless protein homolog A (710 aa).

3 WD repeats span residues 47–89 (GMPV…MQRL), 96–135 (AHTN…LIGE), and 138–178 (GHQC…KDGF). The DDB1-binding motif signature appears at 168–171 (WDTR). A Nuclear localization signal motif is present at residues 197 to 204 (PSKMKKRK). WD repeat units lie at residues 215-254 (DSQQ…SAYR), 270-309 (TRKL…TDPV), 314-355 (GHQN…AAPV), and 359-398 (GHCQ…CEDS). Positions 244 to 247 (WDLR) match the DDB1-binding motif motif. Disordered regions lie at residues 428–534 (GKPS…VSSA) and 652–698 (ALGH…PGSM). The segment covering 430–450 (PSVMSSSSLTSSPTPASCAPS) has biased composition (low complexity). Polar residues-rich tracts occupy residues 504-516 (TPKS…TKTP) and 659-690 (SSPQ…SPVS).

It belongs to the WD repeat cdt2 family. In terms of assembly, component of the DCX(DTL) E3 ubiquitin ligase complex, at least composed of cul4 (cul4a or cul4b), ddb1, dtl/cdt2 and rbx1.

It localises to the nucleus. The protein localises to the cytoplasm. The protein resides in the cytoskeleton. It is found in the microtubule organizing center. Its subcellular location is the centrosome. It localises to the chromosome. It functions in the pathway protein modification; protein ubiquitination. Substrate-specific adapter of a DCX (DDB1-CUL4-X-box) E3 ubiquitin-protein ligase complex required for cell cycle control, DNA damage response and translesion DNA synthesis. The DCX(DTL) complex, also named CRL4(CDT2) complex, mediates the polyubiquitination and subsequent degradation of CDT1, CDKN1A/p21(CIP1), KMT5A and SDE2. CDT1 degradation in response to DNA damage is necessary to ensure proper cell cycle regulation of DNA replication. CDKN1A/p21(CIP1) degradation during S phase or following UV irradiation is essential to control replication licensing. KMT5A degradation is also important for a proper regulation of mechanisms such as TGF-beta signaling, cell cycle progression, DNA repair and cell migration. Most substrates require their interaction with PCNA for their polyubiquitination: substrates interact with PCNA via their PIP-box, and those containing the 'K+4' motif in the PIP box, recruit the DCX(DTL) complex, leading to their degradation. In undamaged proliferating cells, the DCX(DTL) complex also promotes the 'Lys-164' monoubiquitination of PCNA, thereby being involved in PCNA-dependent translesion DNA synthesis. May play a role in the regulation of the circadian clock. This Xenopus laevis (African clawed frog) protein is Denticleless protein homolog A (dtl-a).